A 1233-amino-acid chain; its full sequence is ATP-dependent helicase/nuclease subunit A (1233 aa).

The UvrD-like helicase ATP-binding domain occupies Thr-3–Arg-474. Ala-24 to Thr-31 contacts ATP. The UvrD-like helicase C-terminal domain occupies Val-518–Gly-809. The tract at residues Val-533–Glu-555 is disordered.

It belongs to the helicase family. AddA subfamily. Heterodimer of AddA and AddB/RexB. Mg(2+) serves as cofactor.

It catalyses the reaction Couples ATP hydrolysis with the unwinding of duplex DNA by translocating in the 3'-5' direction.. It carries out the reaction ATP + H2O = ADP + phosphate + H(+). The heterodimer acts as both an ATP-dependent DNA helicase and an ATP-dependent, dual-direction single-stranded exonuclease. Recognizes the chi site generating a DNA molecule suitable for the initiation of homologous recombination. The AddA nuclease domain is required for chi fragment generation; this subunit has the helicase and 3' -&gt; 5' nuclease activities. The polypeptide is ATP-dependent helicase/nuclease subunit A (Thermoanaerobacter pseudethanolicus (strain ATCC 33223 / 39E) (Clostridium thermohydrosulfuricum)).